The sequence spans 263 residues: Glucosamine-6-phosphate deaminase (263 aa).

Aspartate 72 serves as the catalytic Proton acceptor; for enolization step. The active-site For ring-opening step is the aspartate 141. Catalysis depends on histidine 143, which acts as the Proton acceptor; for ring-opening step. Catalysis depends on glutamate 148, which acts as the For ring-opening step.

It belongs to the glucosamine/galactosamine-6-phosphate isomerase family. NagB subfamily.

It catalyses the reaction alpha-D-glucosamine 6-phosphate + H2O = beta-D-fructose 6-phosphate + NH4(+). The protein operates within amino-sugar metabolism; N-acetylneuraminate degradation; D-fructose 6-phosphate from N-acetylneuraminate: step 5/5. With respect to regulation, allosterically activated by N-acetylglucosamine 6-phosphate (GlcNAc6P). Its function is as follows. Catalyzes the reversible isomerization-deamination of glucosamine 6-phosphate (GlcN6P) to form fructose 6-phosphate (Fru6P) and ammonium ion. This is Glucosamine-6-phosphate deaminase from Phocaeicola vulgatus (strain ATCC 8482 / DSM 1447 / JCM 5826 / CCUG 4940 / NBRC 14291 / NCTC 11154) (Bacteroides vulgatus).